A 486-amino-acid polypeptide reads, in one-letter code: ATP synthase subunit beta (486 aa).

An ATP-binding site is contributed by 170–177 (GGAGVGKT).

This sequence belongs to the ATPase alpha/beta chains family. F-type ATPases have 2 components, CF(1) - the catalytic core - and CF(0) - the membrane proton channel. CF(1) has five subunits: alpha(3), beta(3), gamma(1), delta(1), epsilon(1). CF(0) has three main subunits: a(1), b(2) and c(9-12). The alpha and beta chains form an alternating ring which encloses part of the gamma chain. CF(1) is attached to CF(0) by a central stalk formed by the gamma and epsilon chains, while a peripheral stalk is formed by the delta and b chains.

The protein localises to the cell membrane. It catalyses the reaction ATP + H2O + 4 H(+)(in) = ADP + phosphate + 5 H(+)(out). Its function is as follows. Produces ATP from ADP in the presence of a proton gradient across the membrane. The catalytic sites are hosted primarily by the beta subunits. This is ATP synthase subunit beta from Clavibacter michiganensis subsp. michiganensis (strain NCPPB 382).